Reading from the N-terminus, the 103-residue chain is Co-chaperonin GroES (103 aa).

The protein belongs to the GroES chaperonin family. In terms of assembly, heptamer of 7 subunits arranged in a ring. Interacts with the chaperonin GroEL.

It localises to the cytoplasm. In terms of biological role, together with the chaperonin GroEL, plays an essential role in assisting protein folding. The GroEL-GroES system forms a nano-cage that allows encapsulation of the non-native substrate proteins and provides a physical environment optimized to promote and accelerate protein folding. GroES binds to the apical surface of the GroEL ring, thereby capping the opening of the GroEL channel. This Rippkaea orientalis (strain PCC 8801 / RF-1) (Cyanothece sp. (strain PCC 8801)) protein is Co-chaperonin GroES.